Consider the following 239-residue polypeptide: Homeobox-leucine zipper protein HOX12 (239 aa).

The tract at residues 22-65 (PEAATSGGEQKKARQRRRRKVKPEAAAALAGESGGDEQAKKRRL) is disordered. The segment at residues 58-117 (EQAKKRRLSDEQARFLEMSFKKERKLETPRKVQLAAELGLDAKQVAVWFQNRRARHKSKL) is a DNA-binding region (homeobox). Residues 107–168 (QNRRARHKSK…KLAAVAAATT (62 aa)) adopt a coiled-coil conformation.

Belongs to the HD-ZIP homeobox family. Class I subfamily. In terms of tissue distribution, expressed in seedlings, roots, stems, leaf sheaths and panicles.

It is found in the nucleus. Functionally, probable transcription factor. The chain is Homeobox-leucine zipper protein HOX12 (HOX12) from Oryza sativa subsp. indica (Rice).